The sequence spans 432 residues: Adenosylhomocysteinase (432 aa).

Residues Met-1–Thr-24 form a disordered region. Substrate contacts are provided by Asp-137 and Glu-162. Thr-163 to Thr-165 provides a ligand contact to NAD(+). Substrate is bound by residues Lys-192 and Asp-196. Residues Asn-197, Gly-226–Gly-231, Glu-249, Asn-284, Ala-305–His-307, and Asn-352 each bind NAD(+).

Belongs to the adenosylhomocysteinase family. NAD(+) serves as cofactor.

The protein resides in the cytoplasm. The catalysed reaction is S-adenosyl-L-homocysteine + H2O = L-homocysteine + adenosine. Its pathway is amino-acid biosynthesis; L-homocysteine biosynthesis; L-homocysteine from S-adenosyl-L-homocysteine: step 1/1. Its function is as follows. May play a key role in the regulation of the intracellular concentration of adenosylhomocysteine. The chain is Adenosylhomocysteinase from Haloquadratum walsbyi (strain DSM 16790 / HBSQ001).